A 136-amino-acid chain; its full sequence is Polyadenylate-binding protein-interacting protein 2B (136 aa).

Residues 15–25 (NGSSVASTSPS) show a composition bias toward polar residues. Disordered stretches follow at residues 15–40 (NGSS…HEEK) and 107–136 (SVGD…GVKY). Positions 27–40 (KCKEDQGLNGHEEK) are enriched in basic and acidic residues.

This sequence belongs to the PAIP2 family. Interacts (via central acidic portion and C-terminus) with PABPC1 (via the second and third RRM domains and the C-terminus). Ubiquitinated in vitro. In terms of tissue distribution, expressed at very high levels in pancreas, at high levels in testis and at moderately high levels in brain, heart and lung (at protein level).

In terms of biological role, inhibits translation of capped and polyadenylated mRNAs by displacing PABPC1 from the poly(A) tail. This is Polyadenylate-binding protein-interacting protein 2B (Paip2b) from Mus musculus (Mouse).